Consider the following 128-residue polypeptide: 3-aminoacrylate deaminase RutC (128 aa).

This sequence belongs to the RutC family. Homotrimer.

It carries out the reaction (Z)-3-aminoacrylate + H2O + H(+) = 3-oxopropanoate + NH4(+). Functionally, involved in pyrimidine catabolism. Catalyzes the deamination of 3-aminoacrylate to malonic semialdehyde, a reaction that can also occur spontaneously. RutC may facilitate the reaction and modulate the metabolic fitness, rather than catalyzing essential functions. The polypeptide is 3-aminoacrylate deaminase RutC (Escherichia coli (strain SE11)).